We begin with the raw amino-acid sequence, 536 residues long: MKHPTVALLGVGMLGCAAALPAGQVANGAQDDPVPAARTAPATAATAPADFGATSDPSIAGTGFPGLAGFPGFPGSGAAQAGPVHAPSTFGPAAGPAGFQGLSGGPGFAFPGFGGGSGFGFTGFGGMSAFPGIPGFGGLQGSAPSQAAAAPSTGDSRSGLPGFPGVSGGSGFGFPSFGGMSASPSLPGFGGLQGSGPSQAAAAPSTGDSGSGLPGSPGFSGGSGFGFPGFGGMSAGGGAPSTMGFPGFPGFTGFPGMTGGFGVPGSAPDQGASTPAQAASFPAAGRAGNAIPSASSAPASNGMGAAASLHNLQARQFVGTTGHGMVPPAXGSGLPGSPGFSGGSGFGFPGFGGMSAGGGAPSTMGFPGFPGFTGFPGMTGGFGVPGSAPDQGASTPAQAASFPAAGRAGNAIPSASSAPASNGMGAAASLHNLQARQFVGTTGHGMVPPAFHYMFGWPPVIPSAAGAMPNLGTGFNADAFGAEFLGGGEMPSPTSTAASVAPTANSVPATGTAEASTSTPVASAATSAVSATSSAE.

The signal sequence occupies residues 1–19 (MKHPTVALLGVGMLGCAAA). 5 disordered regions span residues 141-164 (GSAP…PGFP), 185-220 (SLPG…PGFS), 261-302 (FGVP…ASNG), 385-423 (PGSA…ASNG), and 491-536 (PSPT…SSAE). The span at 195-208 (SGPSQAAAAPSTGD) shows a compositional bias: low complexity. Over residues 209 to 220 (SGSGLPGSPGFS) the composition is skewed to gly residues. Composition is skewed to low complexity over residues 287–302 (AGNA…ASNG) and 408–423 (AGNA…ASNG).

Its pathway is secondary metabolite biosynthesis; terpenoid biosynthesis. In terms of biological role, part of the gene cluster that mediates the biosynthesis of calidodehydroaustin, a fungal meroterpenoid. The first step of the pathway is the synthesis of 3,5-dimethylorsellinic acid by the polyketide synthase ausA. 3,5-dimethylorsellinic acid is then prenylated by the polyprenyl transferase ausN. Further epoxidation by the FAD-dependent monooxygenase ausM and cyclization by the probable terpene cyclase ausL lead to the formation of protoaustinoid A. Protoaustinoid A is then oxidized to spiro-lactone preaustinoid A3 by the combined action of the FAD-binding monooxygenases ausB and ausC, and the dioxygenase ausE. Acid-catalyzed keto-rearrangement and ring contraction of the tetraketide portion of preaustinoid A3 by ausJ lead to the formation of preaustinoid A4. The aldo-keto reductase ausK, with the help of ausH, is involved in the next step by transforming preaustinoid A4 into isoaustinone which is in turn hydroxylated by the P450 monooxygenase ausI to form austinolide. The cytochrome P450 monooxygenase ausG modifies austinolide to austinol. Austinol is further acetylated to austin by the O-acetyltransferase ausP, which spontaneously changes to dehydroaustin. The cytochrome P450 monooxygenase ausR then converts dehydroaustin is into 7-dehydrodehydroaustin. The hydroxylation catalyzed by ausR permits the O-acetyltransferase ausQ to add an additional acetyl group to the molecule, leading to the formation of acetoxydehydroaustin. The short chain dehydrogenase ausT catalyzes the reduction of the double bond present between carbon atoms 1 and 2 to convert 7-dehydrodehydroaustin into 1,2-dihydro-7-hydroxydehydroaustin. AusQ catalyzes not only an acetylation reaction but also the addition of the PKS ausV diketide product to 1,2-dihydro-7-hydroxydehydroaustin, forming precalidodehydroaustin. Finally, the iron/alpha-ketoglutarate-dependent dioxygenase converts precalidodehydroaustin into calidodehydroaustin. This Aspergillus calidoustus protein is Austinoid biosynthesis cluster protein W.